A 710-amino-acid polypeptide reads, in one-letter code: Adenylosuccinate synthetase (710 aa).

Residues Met1–Tyr54 form a disordered region. The segment covering Tyr10 to Arg25 has biased composition (polar residues). A compositionally biased stretch (basic and acidic residues) spans Thr44–Tyr54. GTP is bound by residues Gly180–Lys186 and Gly210–Thr212. Asp181 acts as the Proton acceptor in catalysis. Asp181 and Gly210 together coordinate Mg(2+). IMP-binding positions include Asp181–Lys184, Asn208–His211, Thr295, Lys309, Gln421, Thr437, and Lys567. Residue His211 is the Proton donor of the active site. Ala563–Arg569 contacts substrate. Residues Arg569 and Gly697–Gly699 contribute to the GTP site.

This sequence belongs to the adenylosuccinate synthetase family. Homodimer. Mg(2+) serves as cofactor.

It localises to the cytoplasm. The enzyme catalyses IMP + L-aspartate + GTP = N(6)-(1,2-dicarboxyethyl)-AMP + GDP + phosphate + 2 H(+). Its pathway is purine metabolism; AMP biosynthesis via de novo pathway; AMP from IMP: step 1/2. Plays an important role in the salvage pathway for purine nucleotide biosynthesis. Catalyzes the first committed step in the biosynthesis of AMP from IMP. This Leishmania major protein is Adenylosuccinate synthetase.